The primary structure comprises 208 residues: Outer-membrane lipoprotein LolB (208 aa).

A signal peptide spans 1-17; it reads MIRRLLGVALLTGAITG. Cys-18 is lipidated: N-palmitoyl cysteine. Cys-18 carries the S-diacylglycerol cysteine lipid modification.

This sequence belongs to the LolB family. As to quaternary structure, monomer.

The protein resides in the cell outer membrane. Functionally, plays a critical role in the incorporation of lipoproteins in the outer membrane after they are released by the LolA protein. The protein is Outer-membrane lipoprotein LolB of Marinobacter nauticus (strain ATCC 700491 / DSM 11845 / VT8) (Marinobacter aquaeolei).